Reading from the N-terminus, the 129-residue chain is MANLNQIQKEVSEILSDQKSMKADIKAILELLGSQNPIKESLETVAAKIVNDLTKLINDCPCNKEILEALGNQPKEQLIGQPKEKGKGLNLGKYSYPNYGVGNEELGSSGNPKALTWPFKAPAGWPNQY.

Coiled coils occupy residues 1–31 (MANL…ILEL) and 38–59 (IKES…LIND). Residues 122–129 (PAGWPNQY) form a capsid binding region.

This sequence belongs to the caulimovirus ORF III family. Homotetramer, through coiled-coil domain. Homotrimer when interacts with icosehadral capsid. Interacts with capsid protein, and with Movement protein.

The protein resides in the virion. It is found in the host cell junction. The protein localises to the host plasmodesma. Functionally, plays a role in virus cell-to-cell and plant-to-plant transmission. Interacts with virion icosahedral capsid and movement protein, thereby facilitating virion cell-to-cell transmission through plasmodesmata opened by viral movement protein. Also interacts with aphid transmission factor, attaching the virion to aphid stylet when the animal feeds on an virus infected plant. Aphid saliva may later detach the virion, inducing release of infectious particles when the animal feeds on a new plant. The protein is Virion-associated protein of Cauliflower mosaic virus (strain D/H) (CaMV).